A 331-amino-acid polypeptide reads, in one-letter code: Probable cytosolic iron-sulfur protein assembly protein Ciao1 (331 aa).

7 WD repeats span residues 12–51, 57–96, 97–136, 142–181, 188–227, 246–285, and 297–331; these read GHKGRIWGVAWHPKGNSFASCGEDKAIRIWSLSGNTWTTK, GHKRTIREVRWSPCGEYLASASFDATTAIWSKHECTATLE, GHENEVKSVSWSRSGGLLATCSRDKSVWIWEVAGDDEFEC, AHSQDVKRVVWHPTKEVLASASYDNTIKMFAESALDSDWD, SHTSTVWSIDFDADGERLVSCSDDATLKIWRAYHPGNDAG, EHSRAIYDVSWCKQTGLIASACGDDGIRIFKECSDSKRDA, and AHEQDVNAVEWNPVTAGQLISCSDDGTIKIWKLQE.

This sequence belongs to the WD repeat CIA1 family.

Its function is as follows. Essential component of the cytosolic iron-sulfur (Fe/S) protein assembly machinery. Required for the maturation of extramitochondrial Fe/S proteins. In Drosophila virilis (Fruit fly), this protein is Probable cytosolic iron-sulfur protein assembly protein Ciao1.